The sequence spans 332 residues: ATP-dependent (S)-NAD(P)H-hydrate dehydratase (332 aa).

In terms of domain architecture, YjeF C-terminal spans 46-326; it reads LLERARNIVP…EQIHNVFDDI (281 aa). (6S)-NADPHX-binding positions include Gly146 and 199-205; that span reads NAIEFCR. Residues 230–234 and 251–260 contribute to the ATP site; these read KGLND and GSGRRCGGQG. Position 261 (Asp261) interacts with (6S)-NADPHX.

This sequence belongs to the NnrD/CARKD family. The cofactor is Mg(2+).

The enzyme catalyses (6S)-NADHX + ATP = ADP + phosphate + NADH + H(+). It carries out the reaction (6S)-NADPHX + ATP = ADP + phosphate + NADPH + H(+). Catalyzes the dehydration of the S-form of NAD(P)HX at the expense of ATP, which is converted to ADP. Together with NAD(P)HX epimerase, which catalyzes the epimerization of the S- and R-forms, the enzyme allows the repair of both epimers of NAD(P)HX, a damaged form of NAD(P)H that is a result of enzymatic or heat-dependent hydration. This is ATP-dependent (S)-NAD(P)H-hydrate dehydratase from Aedes aegypti (Yellowfever mosquito).